The chain runs to 2890 residues: Bifunctional DNA-directed RNA polymerase subunit beta-beta' (2890 aa).

The DNA-directed RNA polymerase subunit beta stretch occupies residues 1-1377 (MSKKIPLKNR…DINIFGDDVD (1377 aa)). The segment at 1384-2890 (PIVIKEDDRP…LRTLEDDPKF (1507 aa)) is DNA-directed RNA polymerase subunit beta'. Zn(2+)-binding residues include Cys1449, Cys1451, Cys1465, and Cys1468. Residues Asp1849, Asp1851, and Asp1853 each coordinate Mg(2+). Residues Cys2179, Cys2253, Cys2260, and Cys2263 each coordinate Zn(2+).

In the N-terminal section; belongs to the RNA polymerase beta chain family. The protein in the C-terminal section; belongs to the RNA polymerase beta' chain family. As to quaternary structure, the RNAP catalytic core consists of 2 alpha, 1 beta/beta' and 1 omega subunit. When a sigma factor is associated with the core the holoenzyme is formed, which can initiate transcription. It depends on Mg(2+) as a cofactor. Requires Zn(2+) as cofactor.

It catalyses the reaction RNA(n) + a ribonucleoside 5'-triphosphate = RNA(n+1) + diphosphate. In terms of biological role, DNA-dependent RNA polymerase catalyzes the transcription of DNA into RNA using the four ribonucleoside triphosphates as substrates. The sequence is that of Bifunctional DNA-directed RNA polymerase subunit beta-beta' (rpoBC) from Helicobacter pylori (strain Shi470).